A 458-amino-acid chain; its full sequence is Transcription factor PCF5 (458 aa).

4 disordered regions span residues 1 to 103 (MGDA…RGPR), 159 to 182 (GAGAGNAAAPPSSSTHPDSAENSD), 278 to 299 (MFHHQQHRHGGGGGGGNGTTQQ), and 424 to 458 (RLPARIQGDEEHNGGGGGNGDKPPPPSSVSSASHH). A compositionally biased stretch (gly residues) spans 65-74 (RGGGGGGGGE). The TCP domain maps to 89-147 (RKDRHSKVCTARGPRDRRVRLSAHTAIQFYDVQDRLGYDRPSKAVDWLIKNAKDAIDKL).

Forms homodimers and heterodimers.

The protein resides in the nucleus. Its function is as follows. Transcription activator. Binds the promoter core sequence 5'-GGNCC-3'. The sequence is that of Transcription factor PCF5 (PCF5) from Oryza sativa subsp. japonica (Rice).